An 88-amino-acid chain; its full sequence is Protein transport protein SBH2 (88 aa).

Positions 1–42 are disordered; it reads MAASVPPGGQRILQKRRQAQSIKEKQAKQTPTSTRQAGYGGS. Residues 1–61 are Cytoplasmic-facing; sequence MAASVPPGGQ…DEANGFRVDS (61 aa). Polar residues predominate over residues 28-42; that stretch reads KQTPTSTRQAGYGGS. The helical transmembrane segment at 62-82 threads the bilayer; it reads LVVLFLSVGFIFSVIALHLLT.

This sequence belongs to the SEC61-beta family. In terms of assembly, component of the heterotrimeric Ssh1 complex, which is composed of SSH1, SBH2 and SSS1.

It localises to the endoplasmic reticulum membrane. Functionally, part of the Ssh1 complex, which probably is the major component of a channel-forming translocon complex that may function exclusively in the cotranslational pathway of protein endoplasmic reticulum (ER) import. In Saccharomyces cerevisiae (strain ATCC 204508 / S288c) (Baker's yeast), this protein is Protein transport protein SBH2 (SBH2).